We begin with the raw amino-acid sequence, 230 residues long: Ribonuclease 3 (230 aa).

Residues 5–125 enclose the RNase III domain; that stretch reads YSRFYNILGY…VIGAIYLDSD (121 aa). E40 is a Mg(2+) binding site. D44 is an active-site residue. Mg(2+)-binding residues include D111 and E114. Residue E114 is part of the active site. A DRBM domain is found at 153–223; sequence DSKSKLQEIL…AEKMIEMLSQ (71 aa).

This sequence belongs to the ribonuclease III family. Homodimer. Mg(2+) serves as cofactor.

The protein resides in the cytoplasm. It catalyses the reaction Endonucleolytic cleavage to 5'-phosphomonoester.. Its function is as follows. Digests double-stranded RNA. Involved in the processing of primary rRNA transcript to yield the immediate precursors to the large and small rRNAs (23S and 16S). Processes some mRNAs, and tRNAs when they are encoded in the rRNA operon. Processes pre-crRNA and tracrRNA of type II CRISPR loci if present in the organism. This is Ribonuclease 3 from Francisella tularensis subsp. holarctica (strain LVS).